A 562-amino-acid polypeptide reads, in one-letter code: Malate synthase (562 aa).

Arginine 177 (proton acceptor) is an active-site residue. Aspartate 463 functions as the Proton donor in the catalytic mechanism. Residues 560–562 carry the Microbody targeting signal motif; that stretch reads SRL.

This sequence belongs to the malate synthase family.

It localises to the glyoxysome. The catalysed reaction is glyoxylate + acetyl-CoA + H2O = (S)-malate + CoA + H(+). Its pathway is carbohydrate metabolism; glyoxylate cycle; (S)-malate from isocitrate: step 2/2. In terms of biological role, does not seem to be essential for lipid utilization and gluconeogenesis in seedlings. The sequence is that of Malate synthase from Arabidopsis thaliana (Mouse-ear cress).